The chain runs to 330 residues: tRNA (cytosine(38)-C(5))-methyltransferase (330 aa).

The region spanning 7 to 330 (LRVLELYSGI…ISLLLEPLNF (324 aa)) is the SAM-dependent MTase C5-type domain. Cys-81 is an active-site residue.

Belongs to the class I-like SAM-binding methyltransferase superfamily. C5-methyltransferase family.

Its subcellular location is the cytoplasm. The protein localises to the nucleus. It carries out the reaction cytidine(38) in tRNA + S-adenosyl-L-methionine = 5-methylcytidine(38) in tRNA + S-adenosyl-L-homocysteine + H(+). Functionally, specifically methylates cytosine 38 in the anticodon loop of tRNA(Asp). Can also methylate cytosine 38 in tRNA(Glu), albeit to a lower level, but not tRNA(Lys). Pmt1-dependent tRNA methylation is induced by nitrogen limitation and depends on the nutrient-sensing protein kinase sck2. Does not have DNA-methylation activity. This Schizosaccharomyces pombe (strain 972 / ATCC 24843) (Fission yeast) protein is tRNA (cytosine(38)-C(5))-methyltransferase (pmt1).